Reading from the N-terminus, the 361-residue chain is Phosphoserine aminotransferase (361 aa).

An L-glutamate-binding site is contributed by R42. Pyridoxal 5'-phosphate contacts are provided by residues 76 to 77 (AT), W102, T152, D172, and Q195. K196 carries the post-translational modification N6-(pyridoxal phosphate)lysine. A pyridoxal 5'-phosphate-binding site is contributed by 237–238 (NT).

It belongs to the class-V pyridoxal-phosphate-dependent aminotransferase family. SerC subfamily. In terms of assembly, homodimer. Pyridoxal 5'-phosphate is required as a cofactor.

Its subcellular location is the cytoplasm. It carries out the reaction O-phospho-L-serine + 2-oxoglutarate = 3-phosphooxypyruvate + L-glutamate. The enzyme catalyses 4-(phosphooxy)-L-threonine + 2-oxoglutarate = (R)-3-hydroxy-2-oxo-4-phosphooxybutanoate + L-glutamate. Its pathway is amino-acid biosynthesis; L-serine biosynthesis; L-serine from 3-phospho-D-glycerate: step 2/3. It participates in cofactor biosynthesis; pyridoxine 5'-phosphate biosynthesis; pyridoxine 5'-phosphate from D-erythrose 4-phosphate: step 3/5. In terms of biological role, catalyzes the reversible conversion of 3-phosphohydroxypyruvate to phosphoserine and of 3-hydroxy-2-oxo-4-phosphonooxybutanoate to phosphohydroxythreonine. The polypeptide is Phosphoserine aminotransferase (Xanthomonas axonopodis pv. citri (strain 306)).